Consider the following 100-residue polypeptide: MVPTSYYVLLSAILFTIGVLGVLLRRNAIVIFMSVELMLNAANLALVAFARERLGVEAQAIVFFVITVAAAEVAVGLALLVSIFRTKRTADVDEVSTLKG.

A run of 3 helical transmembrane segments spans residues 4-24 (TSYY…GVLL), 29-49 (IVIF…LVAF), and 61-81 (IVFF…ALLV).

Belongs to the complex I subunit 4L family. In terms of assembly, NDH-1 is composed of 14 different subunits. Subunits NuoA, H, J, K, L, M, N constitute the membrane sector of the complex.

It localises to the cell membrane. The catalysed reaction is a quinone + NADH + 5 H(+)(in) = a quinol + NAD(+) + 4 H(+)(out). Its function is as follows. NDH-1 shuttles electrons from NADH, via FMN and iron-sulfur (Fe-S) centers, to quinones in the respiratory chain. The immediate electron acceptor for the enzyme in this species is believed to be ubiquinone. Couples the redox reaction to proton translocation (for every two electrons transferred, four hydrogen ions are translocated across the cytoplasmic membrane), and thus conserves the redox energy in a proton gradient. The protein is NADH-quinone oxidoreductase subunit K of Chloroflexus aggregans (strain MD-66 / DSM 9485).